Reading from the N-terminus, the 93-residue chain is HssA/B-like protein 26 (93 aa).

It belongs to the hssA/B family.

The sequence is that of HssA/B-like protein 26 (hssl26) from Dictyostelium discoideum (Social amoeba).